Here is a 371-residue protein sequence, read N- to C-terminus: Mitogen-activated protein kinase homolog MMK2 (371 aa).

The region spanning 37 to 323 (VPPIRSVGRG…VDEALCHPYM (287 aa)) is the Protein kinase domain. ATP contacts are provided by residues 43-51 (VGRGAYGIV) and Lys-66. Asp-163 (proton acceptor) is an active-site residue. Position 195 is a phosphothreonine (Thr-195). The TXY motif lies at 195–197 (TEY). Tyr-197 is modified (phosphotyrosine).

The protein belongs to the protein kinase superfamily. CMGC Ser/Thr protein kinase family. MAP kinase subfamily. Mg(2+) is required as a cofactor. Dually phosphorylated on Thr-195 and Tyr-197, which activates the enzyme. Autophosphorylated.

It catalyses the reaction L-seryl-[protein] + ATP = O-phospho-L-seryl-[protein] + ADP + H(+). It carries out the reaction L-threonyl-[protein] + ATP = O-phospho-L-threonyl-[protein] + ADP + H(+). Its activity is regulated as follows. Activated by tyrosine and threonine phosphorylation. This Medicago sativa (Alfalfa) protein is Mitogen-activated protein kinase homolog MMK2 (MMK2).